The chain runs to 74 residues: UPF0352 protein MS1910 (74 aa).

This sequence belongs to the UPF0352 family.

The sequence is that of UPF0352 protein MS1910 from Mannheimia succiniciproducens (strain KCTC 0769BP / MBEL55E).